The chain runs to 891 residues: Kinesin-like protein KIN-UB (891 aa).

Positions 1-54 (MSGKVANATPKAAAGKPRLSAAGGGAYRRTSSGPLPSAGGGGGRASSESGVSSR) are disordered. Low complexity predominate over residues 45-54 (ASSESGVSSR). The Kinesin motor domain occupies 54 to 400 (RVRVAVRLRP…IMFGQRAMKV (347 aa)). 139–146 (GQTGTGKT) contacts ATP. The D-BOX signature appears at 370–378 (RTSLVVTIG). Positions 502-592 (TSSEVGEVQN…ADETRRSLDR (91 aa)) form a coiled coil. Residues 586–595 (TRRSLDRGDG) show a composition bias toward basic and acidic residues. Positions 586-626 (TRRSLDRGDGSGKIFPGFDSLMSHSRNSQPREQSNGPKPPI) are disordered. The span at 607–621 (MSHSRNSQPREQSNG) shows a compositional bias: polar residues. ARM repeat units lie at residues 623 to 662 (KPPIAKLFEQVGLQKILSLLESEEPDVRVHAVKVVANLAA), 664 to 704 (EANQ…NLAM), 706 to 746 (ETNQ…NLCG), and 748 to 787 (DKLQTRLRGEGGIKALLGMVKCGHPDVLAQVARGIANFAK).

The protein belongs to the TRAFAC class myosin-kinesin ATPase superfamily. Kinesin family. Ungrouped subfamily.

It localises to the cytoplasm. The protein resides in the cytoskeleton. The protein is Kinesin-like protein KIN-UB of Oryza sativa subsp. japonica (Rice).